Reading from the N-terminus, the 342-residue chain is BAG family molecular chaperone regulator 1 (342 aa).

The interval 1–41 (MMKMMRNKPTNLPTAGMTNGGRGSGGGGGGGGRESGGRDLE) is disordered. The span at 8-17 (KPTNLPTAGM) shows a compositional bias: polar residues. Over residues 18-34 (TNGGRGSGGGGGGGGRE) the composition is skewed to gly residues. One can recognise a Ubiquitin-like domain in the interval 65 to 141 (PMIRVRIKYG…MVLIEDPLSQ (77 aa)). One can recognise a BAG domain in the interval 160–238 (AISDISLEVD…NYVETLDALK (79 aa)). Ser-298 carries the phosphoserine modification.

Binds to the ATPase domain of HSP70/HSC70 chaperones.

In terms of biological role, co-chaperone that regulates diverse cellular pathways, such as programmed cell death and stress responses. This Arabidopsis thaliana (Mouse-ear cress) protein is BAG family molecular chaperone regulator 1 (BAG1).